The following is a 472-amino-acid chain: Uronate isomerase (472 aa).

This sequence belongs to the metallo-dependent hydrolases superfamily. Uronate isomerase family.

The enzyme catalyses D-glucuronate = D-fructuronate. It catalyses the reaction aldehydo-D-galacturonate = keto-D-tagaturonate. The protein operates within carbohydrate metabolism; pentose and glucuronate interconversion. The protein is Uronate isomerase of Nostoc punctiforme (strain ATCC 29133 / PCC 73102).